A 341-amino-acid chain; its full sequence is Ribosomal RNA small subunit methyltransferase H (341 aa).

Residues 47 to 49, Asp64, Phe91, Asp109, and Gln116 contribute to the S-adenosyl-L-methionine site; that span reads GGY.

Belongs to the methyltransferase superfamily. RsmH family.

The protein resides in the cytoplasm. It catalyses the reaction cytidine(1402) in 16S rRNA + S-adenosyl-L-methionine = N(4)-methylcytidine(1402) in 16S rRNA + S-adenosyl-L-homocysteine + H(+). Specifically methylates the N4 position of cytidine in position 1402 (C1402) of 16S rRNA. This is Ribosomal RNA small subunit methyltransferase H from Agrobacterium fabrum (strain C58 / ATCC 33970) (Agrobacterium tumefaciens (strain C58)).